Consider the following 160-residue polypeptide: Putative UPF0479 protein YLR466C-A (160 aa).

The next 2 membrane-spanning stretches (helical) occupy residues 39-59 (IVFC…KVLQ) and 136-156 (VPMI…ISQH).

The protein belongs to the UPF0479 family.

Its subcellular location is the membrane. This is Putative UPF0479 protein YLR466C-A from Saccharomyces cerevisiae (strain ATCC 204508 / S288c) (Baker's yeast).